The chain runs to 396 residues: Chorismate synthase (396 aa).

2 residues coordinate NADP(+): arginine 40 and arginine 46. Residues 134-136, 257-258, glycine 302, 317-321, and arginine 343 each bind FMN; these read RSS, QA, and KPIPS.

Belongs to the chorismate synthase family. In terms of assembly, homotetramer. Requires FMNH2 as cofactor.

It carries out the reaction 5-O-(1-carboxyvinyl)-3-phosphoshikimate = chorismate + phosphate. It participates in metabolic intermediate biosynthesis; chorismate biosynthesis; chorismate from D-erythrose 4-phosphate and phosphoenolpyruvate: step 7/7. Functionally, catalyzes the anti-1,4-elimination of the C-3 phosphate and the C-6 proR hydrogen from 5-enolpyruvylshikimate-3-phosphate (EPSP) to yield chorismate, which is the branch point compound that serves as the starting substrate for the three terminal pathways of aromatic amino acid biosynthesis. This reaction introduces a second double bond into the aromatic ring system. This chain is Chorismate synthase, found in Bifidobacterium animalis subsp. lactis (strain AD011).